The primary structure comprises 444 residues: tRNA (guanine-N(7)-)-methyltransferase non-catalytic subunit TRM82 (444 aa).

WD repeat units follow at residues 1–47 (MSVI…WSDD), 48–99 (FDKI…LGAP), 100–147 (PIYS…KRFC), 148–192 (FSKR…EPIL), 193–237 (GHVS…DKWL), 238–279 (FGHK…STFD), and 308–354 (FAVS…ITFP). A disordered region spans residues 55–92 (RNTTAKEQQGQSSENENENKKLKSNKGDSIKRTAAKVP). A compositionally biased stretch (basic and acidic residues) spans 71-85 (NENKKLKSNKGDSIK). S93 carries the phosphoserine modification.

Belongs to the WD repeat TRM82 family. As to quaternary structure, forms a heterodimer with the catalytic subunit TRM8.

The protein localises to the nucleus. The protein operates within tRNA modification; N(7)-methylguanine-tRNA biosynthesis. Functionally, required for the formation of N(7)-methylguanine at position 46 (m7G46) in tRNA, a modification required to maintain stability of tRNAs; its absence resulting in tRNA decay. In the complex, it is required to stabilize and induce conformational changes of the catalytic subunit. This chain is tRNA (guanine-N(7)-)-methyltransferase non-catalytic subunit TRM82, found in Saccharomyces cerevisiae (strain ATCC 204508 / S288c) (Baker's yeast).